The primary structure comprises 130 residues: Small ribosomal subunit protein uS8 (130 aa).

The protein belongs to the universal ribosomal protein uS8 family. Part of the 30S ribosomal subunit.

Its function is as follows. One of the primary rRNA binding proteins, it binds directly to 16S rRNA central domain where it helps coordinate assembly of the platform of the 30S subunit. This is Small ribosomal subunit protein uS8 from Methanoculleus marisnigri (strain ATCC 35101 / DSM 1498 / JR1).